A 322-amino-acid polypeptide reads, in one-letter code: Fructose-1,6-bisphosphatase class 1 (322 aa).

4 residues coordinate Mg(2+): glutamate 84, aspartate 103, leucine 105, and aspartate 106. Substrate-binding positions include 106–109, asparagine 198, and lysine 264; that span reads DGSS. Residue glutamate 270 coordinates Mg(2+).

It belongs to the FBPase class 1 family. In terms of assembly, homotetramer. It depends on Mg(2+) as a cofactor.

Its subcellular location is the cytoplasm. The catalysed reaction is beta-D-fructose 1,6-bisphosphate + H2O = beta-D-fructose 6-phosphate + phosphate. The protein operates within carbohydrate biosynthesis; gluconeogenesis. The sequence is that of Fructose-1,6-bisphosphatase class 1 from Colwellia psychrerythraea (strain 34H / ATCC BAA-681) (Vibrio psychroerythus).